Here is a 103-residue protein sequence, read N- to C-terminus: Small ribosomal subunit protein uS10 (103 aa).

It belongs to the universal ribosomal protein uS10 family. As to quaternary structure, part of the 30S ribosomal subunit.

In terms of biological role, involved in the binding of tRNA to the ribosomes. The polypeptide is Small ribosomal subunit protein uS10 (Acetivibrio thermocellus (strain ATCC 27405 / DSM 1237 / JCM 9322 / NBRC 103400 / NCIMB 10682 / NRRL B-4536 / VPI 7372) (Clostridium thermocellum)).